A 247-amino-acid polypeptide reads, in one-letter code: Aliphatic sulfonates import ATP-binding protein SsuB 2 (247 aa).

The 215-residue stretch at 28 to 242 folds into the ABC transporter domain; it reads VSVRGLQRRY…ALRPILLEEL (215 aa). 60-67 contributes to the ATP binding site; it reads GESGCGKT.

Belongs to the ABC transporter superfamily. Aliphatic sulfonates importer (TC 3.A.1.17.2) family. In terms of assembly, the complex is composed of two ATP-binding proteins (SsuB), two transmembrane proteins (SsuC) and a solute-binding protein (SsuA).

Its subcellular location is the cell inner membrane. It catalyses the reaction ATP + H2O + aliphatic sulfonate-[sulfonate-binding protein]Side 1 = ADP + phosphate + aliphatic sulfonateSide 2 + [sulfonate-binding protein]Side 1.. Part of the ABC transporter complex SsuABC involved in aliphatic sulfonates import. Responsible for energy coupling to the transport system. The chain is Aliphatic sulfonates import ATP-binding protein SsuB 2 from Paraburkholderia xenovorans (strain LB400).